The sequence spans 339 residues: Heat-inducible transcription repressor HrcA (339 aa).

It belongs to the HrcA family.

In terms of biological role, negative regulator of class I heat shock genes (grpE-dnaK-dnaJ and groELS operons). Prevents heat-shock induction of these operons. The sequence is that of Heat-inducible transcription repressor HrcA from Nitrosospira multiformis (strain ATCC 25196 / NCIMB 11849 / C 71).